The primary structure comprises 369 residues: 3-isopropylmalate dehydrogenase (369 aa).

Gly77–Glu90 contacts NAD(+). Arg97, Arg107, Arg135, and Asp226 together coordinate substrate. Mg(2+) is bound by residues Asp226, Asp250, and Asp254. Gly289–Asn301 serves as a coordination point for NAD(+).

The protein belongs to the isocitrate and isopropylmalate dehydrogenases family. LeuB type 1 subfamily. Homodimer. It depends on Mg(2+) as a cofactor. The cofactor is Mn(2+).

The protein localises to the cytoplasm. It carries out the reaction (2R,3S)-3-isopropylmalate + NAD(+) = 4-methyl-2-oxopentanoate + CO2 + NADH. It participates in amino-acid biosynthesis; L-leucine biosynthesis; L-leucine from 3-methyl-2-oxobutanoate: step 3/4. In terms of biological role, catalyzes the oxidation of 3-carboxy-2-hydroxy-4-methylpentanoate (3-isopropylmalate) to 3-carboxy-4-methyl-2-oxopentanoate. The product decarboxylates to 4-methyl-2 oxopentanoate. This chain is 3-isopropylmalate dehydrogenase, found in Cereibacter sphaeroides (strain ATCC 17023 / DSM 158 / JCM 6121 / CCUG 31486 / LMG 2827 / NBRC 12203 / NCIMB 8253 / ATH 2.4.1.) (Rhodobacter sphaeroides).